Consider the following 350-residue polypeptide: Protein RecA (350 aa).

66–73 (GPESSGKT) provides a ligand contact to ATP.

This sequence belongs to the RecA family.

It localises to the cytoplasm. Its function is as follows. Can catalyze the hydrolysis of ATP in the presence of single-stranded DNA, the ATP-dependent uptake of single-stranded DNA by duplex DNA, and the ATP-dependent hybridization of homologous single-stranded DNAs. It interacts with LexA causing its activation and leading to its autocatalytic cleavage. This chain is Protein RecA, found in Dichelobacter nodosus (strain VCS1703A).